Reading from the N-terminus, the 360-residue chain is Photosystem II protein D1 1 (360 aa).

A run of 3 helical transmembrane segments spans residues 29-46, 118-133, and 142-156; these read YVGW…AATV, HFLI…QWEL, and WICV…SATA. A chlorophyll a-binding site is contributed by H118. Y126 serves as a coordination point for pheophytin a. The [CaMn4O5] cluster site is built by D170 and E189. Residues 197 to 218 traverse the membrane as a helical segment; that stretch reads FHMLGVAGVFGGSLFSAMHGSL. H198 is a chlorophyll a binding site. A quinone is bound by residues H215 and 264–265; that span reads SF. Residue H215 participates in Fe cation binding. Position 272 (H272) interacts with Fe cation. The helical transmembrane segment at 274–288 threads the bilayer; that stretch reads FLAAWPVIGIWFTAL. Residues H332, E333, D342, and A344 each coordinate [CaMn4O5] cluster. The propeptide occupies 345–360; sequence AGEVAPVALTAPAING.

It belongs to the reaction center PufL/M/PsbA/D family. PSII is composed of 1 copy each of membrane proteins PsbA, PsbB, PsbC, PsbD, PsbE, PsbF, PsbH, PsbI, PsbJ, PsbK, PsbL, PsbM, PsbT, PsbX, PsbY, PsbZ, Psb30/Ycf12, peripheral proteins PsbO, CyanoQ (PsbQ), PsbU, PsbV and a large number of cofactors. It forms dimeric complexes. The D1/D2 heterodimer binds P680, chlorophylls that are the primary electron donor of PSII, and subsequent electron acceptors. It shares a non-heme iron and each subunit binds pheophytin, quinone, additional chlorophylls, carotenoids and lipids. D1 provides most of the ligands for the Mn4-Ca-O5 cluster of the oxygen-evolving complex (OEC). There is also a Cl(-1) ion associated with D1 and D2, which is required for oxygen evolution. The PSII complex binds additional chlorophylls, carotenoids and specific lipids. serves as cofactor. In terms of processing, tyr-161 forms a radical intermediate that is referred to as redox-active TyrZ, YZ or Y-Z. C-terminally processed by CtpA; processing is essential to allow assembly of the oxygen-evolving complex and thus photosynthetic growth.

It localises to the cellular thylakoid membrane. The enzyme catalyses 2 a plastoquinone + 4 hnu + 2 H2O = 2 a plastoquinol + O2. Functionally, photosystem II (PSII) is a light-driven water:plastoquinone oxidoreductase that uses light energy to abstract electrons from H(2)O, generating O(2) and a proton gradient subsequently used for ATP formation. It consists of a core antenna complex that captures photons, and an electron transfer chain that converts photonic excitation into a charge separation. The D1/D2 (PsbA/PsbD) reaction center heterodimer binds P680, the primary electron donor of PSII as well as several subsequent electron acceptors. The sequence is that of Photosystem II protein D1 1 from Nostoc sp. (strain PCC 7120 / SAG 25.82 / UTEX 2576).